The following is a 556-amino-acid chain: (-)-alpha-pinene synthase (556 aa).

Aspartate 309, aspartate 313, aspartate 453, and glutamate 461 together coordinate Mg(2+). The DDXXD motif motif lies at 309–313; sequence DDMYD.

It belongs to the terpene synthase family. Tpsa subfamily. It depends on Mg(2+) as a cofactor. Mn(2+) is required as a cofactor. Expressed in ripe fruits and roots. Not detected in vegetative tissues.

The protein resides in the cytoplasm. It is found in the cytosol. It catalyses the reaction (2E)-geranyl diphosphate = (1S,5S)-alpha-pinene + diphosphate. It participates in secondary metabolite biosynthesis; terpenoid biosynthesis. Its function is as follows. Monoterpene synthase catalyzing the production of (-)-alpha-pinene, beta-phellandrene and beta-myrcene as the major products. Unable to use farnesyl diphosphate as substrate. Exclusively expressed in the fruit of wild strawberries. Not detected in cultivated varieties. The protein is (-)-alpha-pinene synthase of Fragaria vesca (Woodland strawberry).